The following is a 360-amino-acid chain: Putative F-box protein At5g55150 (360 aa).

In terms of domain architecture, F-box spans 6 to 54; the sequence is SSWSEFLPELLNTVFHNLNDARDILNCATVCSSWKDSSSAVYYSRTFSP.

In Arabidopsis thaliana (Mouse-ear cress), this protein is Putative F-box protein At5g55150.